Here is a 365-residue protein sequence, read N- to C-terminus: Ribosomal RNA large subunit methyltransferase F (365 aa).

The interval Met1–Pro48 is disordered. A compositionally biased stretch (basic and acidic residues) spans Ala33–Pro48.

It belongs to the methyltransferase superfamily. METTL16/RlmF family.

The protein localises to the cytoplasm. It carries out the reaction adenosine(1618) in 23S rRNA + S-adenosyl-L-methionine = N(6)-methyladenosine(1618) in 23S rRNA + S-adenosyl-L-homocysteine + H(+). Its function is as follows. Specifically methylates the adenine in position 1618 of 23S rRNA. The polypeptide is Ribosomal RNA large subunit methyltransferase F (Shewanella baltica (strain OS223)).